Consider the following 295-residue polypeptide: Cyclic dipyrimidine nucleotide synthase CdnE (295 aa).

The segment at 1–25 is disordered; it reads MSIDWEQTFRKWSKPSSETESTKAE. Residues glutamine 51, serine 53, and asparagine 59 each coordinate UTP. Mg(2+) contacts are provided by aspartate 65 and aspartate 67. Residues aspartate 67, aspartate 124, and lysine 125 each coordinate UTP. Aspartate 128 and aspartate 139 together coordinate Mg(2+). Aspartate 139, asparagine 173, lysine 201, and serine 220 together coordinate UTP. Positions 274 to 276 match the Pyrimidine specificity motif (R/Q)xW in donor pocket motif; that stretch reads QMW.

It belongs to the CD-NTase family. E02 subfamily. Mg(2+) is required as a cofactor.

The catalysed reaction is 2 UTP = c-di-UMP + 2 diphosphate. It carries out the reaction UTP + CTP = cyclic CMP-UMP + 2 diphosphate. Cyclic nucleotide synthase (second messenger synthase) of a CBASS antivirus system. CBASS (cyclic oligonucleotide-based antiphage signaling system) provides immunity against bacteriophage. The CD-NTase protein synthesizes cyclic nucleotides in response to infection; these serve as specific second messenger signals. The signals activate a diverse range of effectors, leading to bacterial cell death and thus abortive phage infection. A type I-B(UU) CBASS system. In terms of biological role, cyclic dinucleotide synthase that catalyzes the synthesis of 3',3'-cyclic UMP-UMP (c-di-UMP) as the major product, and of 3',3'-cyclic CMP-UMP as a minor product, which are second messengers for cell signal transduction. This Legionella pneumophila protein is Cyclic dipyrimidine nucleotide synthase CdnE.